The primary structure comprises 479 residues: Poly(A) polymerase catalytic subunit (479 aa).

Residues Asp-202 and Asp-204 contribute to the active site. 3 residues coordinate Ca(2+): Asp-202, Asp-204, and Asp-253.

Belongs to the poxviridae poly(A) polymerase catalytic subunit family. In terms of assembly, heterodimer of a large (catalytic) subunit and a small (regulatory) subunit.

It catalyses the reaction RNA(n) + ATP = RNA(n)-3'-adenine ribonucleotide + diphosphate. Its function is as follows. Polymerase that creates the 3'-poly(A) tail of mRNA's. This Cowpox virus (strain GRI-90 / Grishak) (CPV) protein is Poly(A) polymerase catalytic subunit (OPG063).